The primary structure comprises 491 residues: NADH-quinone oxidoreductase subunit N 1 (491 aa).

14 helical membrane-spanning segments follow: residues 9-29, 38-58, 76-96, 104-124, 126-146, 161-181, 211-231, 246-266, 276-296, 304-324, 329-349, 375-395, 410-432, and 461-481; these read IAAPLLALAAGALLILLLDLL, PMYVAAVGAVLVAGWYLVPLW, FAAVYGLVLLGAALLAILLSF, SGYLALLLWAAMGMVLLGGAG, LMVIFLGIELLSLALYVMIAF, FVLGSVAAAFLIFGFALIYGA, VGVGLAIVGLAFKMALVPFHI, AFMAIGTKAAAFAAMARLLVA, FLLPLSILAFASMMLGATVGI, LMAYSGIANAGYLIMAIPGLG, SAAAYYLAAYGFATMGVFAVV, VGVCLAVLFFGLIGVPPTGGF, AWIVLTGLILSTGISAYVYLKVI, and VVLAIATAGTLVLGVLPGPVS.

This sequence belongs to the complex I subunit 2 family. As to quaternary structure, NDH-1 is composed of 14 different subunits. Subunits NuoA, H, J, K, L, M, N constitute the membrane sector of the complex.

The protein localises to the cell membrane. It catalyses the reaction a quinone + NADH + 5 H(+)(in) = a quinol + NAD(+) + 4 H(+)(out). Functionally, NDH-1 shuttles electrons from NADH, via FMN and iron-sulfur (Fe-S) centers, to quinones in the respiratory chain. The immediate electron acceptor for the enzyme in this species is believed to be a menaquinone. Couples the redox reaction to proton translocation (for every two electrons transferred, four hydrogen ions are translocated across the cytoplasmic membrane), and thus conserves the redox energy in a proton gradient. The sequence is that of NADH-quinone oxidoreductase subunit N 1 from Symbiobacterium thermophilum (strain DSM 24528 / JCM 14929 / IAM 14863 / T).